The sequence spans 455 residues: Single-stranded DNA-binding protein homolog sam-10 (455 aa).

Residues 19–51 (ARDRLTSYIYEYLQQTGASKTAETFKEEVLSTN) form the LisH domain. Disordered stretches follow at residues 217–249 (PPPGGGAQPFPGASGSGGMMPNGAHPHMSLNSP), 281–302 (SDHQPMSAGPAAAAPGATTAGG), 314–343 (GPGSVPQVATTSVGSVGTPSSIGQQLHQPK), and 357–442 (EALT…NGEI). Composition is skewed to low complexity over residues 288-298 (AGPAAAAPGAT) and 321-336 (VATTSVGSVGTPSSIG). Positions 396–406 (HSVNNNVNPGT) are enriched in polar residues. Low complexity predominate over residues 407–421 (PGSNPLSNPMSNPPL).

As to expression, ubiquitously expressed with higher expression in the head and tail ganglia, the vulva and PLM neurons.

Its subcellular location is the cytoplasm. It localises to the nucleus. Functionally, involved cell autonomously in PLM neuron pre-synaptic differentiation by negatively regulating prk-2 expression and in neurite branch positioning. This chain is Single-stranded DNA-binding protein homolog sam-10, found in Caenorhabditis elegans.